The chain runs to 596 residues: Inactive metallocarboxypeptidase ECM14 (596 aa).

A signal peptide spans 1–22 (MHFSVRLSLFLTLASSLPLVSA). A propeptide spanning residues 23-184 (VPQHEDQAYT…QTIYESYPKA (162 aa)) is cleaved from the precursor. The tract at residues 182–211 (PKAGSASPSQQGPTTRRFSPSASTSKSKPH) is disordered. Residues 187–207 (ASPSQQGPTTRRFSPSASTSK) show a composition bias toward polar residues. Positions 220-546 (DYQPLSVLLP…RAMVAMGKFL (327 aa)) constitute a Peptidase M14 domain. Zn(2+) is bound by residues H285 and E288. Substrate is bound by residues 285 to 288 (HARE), R343, and 360 to 361 (DH). A disulfide bond links C354 and C377. Residue N370 is glycosylated (N-linked (GlcNAc...) asparagine). H417 provides a ligand contact to Zn(2+). Substrate is bound at residue 418–419 (SY). The disordered stretch occupies residues 557–596 (DGLRASEEPQDYDNDLEDGEDDKDEQGSTVFRAQADDLQS). Positions 564–580 (EPQDYDNDLEDGEDDKD) are enriched in acidic residues. Residues 583-596 (GSTVFRAQADDLQS) are compositionally biased toward polar residues.

This sequence belongs to the peptidase M14 family. Requires Zn(2+) as cofactor.

Its subcellular location is the vacuole. The protein localises to the secreted. Inactive carboxypeptidase that may play a role in cell wall organization and biogenesis. This Arthroderma benhamiae (strain ATCC MYA-4681 / CBS 112371) (Trichophyton mentagrophytes) protein is Inactive metallocarboxypeptidase ECM14 (ECM14).